Consider the following 314-residue polypeptide: FHA domain-containing protein DDL (314 aa).

A compositionally biased stretch (low complexity) spans 1–10; sequence MAPSSRSPSP. Positions 1–146 are disordered; that stretch reads MAPSSRSPSP…NVEEDSVARM (146 aa). The segment covering 18–127 has biased composition (basic and acidic residues); that stretch reads ARGEKEIGRS…AIASRHDEGS (110 aa). S133 is subject to Phosphoserine. Positions 219–282 constitute an FHA domain; sequence YLFGRERRIA…NKTYINESPI (64 aa).

Interacts with DCL1 (via N-terminus). As to expression, expressed in roots, lateral roots, vascular strands of roots and leaves, vegetative meristems, pollen and developing seeds.

The protein resides in the nucleus. Functionally, involved in the microRNA (miRNA) and short interfering RNA (siRNA) biogenesis. May facilitate DCL1 to access or recognize primary miRNAs. Binds RNA non-specifically. The sequence is that of FHA domain-containing protein DDL (DDL) from Arabidopsis thaliana (Mouse-ear cress).